A 155-amino-acid chain; its full sequence is Cytochrome c-type biogenesis protein CcmE (155 aa).

The Cytoplasmic segment spans residues 1 to 8; that stretch reads MNPIRKKR. A helical; Signal-anchor for type II membrane protein transmembrane segment spans residues 9–29; sequence LYWILALLCGVSIAMALALSA. At 30–155 the chain is on the periplasmic side; that stretch reads LQENINLFYT…PKRVKQESTR (126 aa). Heme-binding residues include histidine 124 and tyrosine 128.

It belongs to the CcmE/CycJ family.

Its subcellular location is the cell inner membrane. Its function is as follows. Heme chaperone required for the biogenesis of c-type cytochromes. Transiently binds heme delivered by CcmC and transfers the heme to apo-cytochromes in a process facilitated by CcmF and CcmH. The chain is Cytochrome c-type biogenesis protein CcmE from Janthinobacterium sp. (strain Marseille) (Minibacterium massiliensis).